Reading from the N-terminus, the 157-residue chain is Histidine-containing phosphotransfer protein 5 (157 aa).

Met1 carries the post-translational modification N-acetylmethionine. Residues 41–148 (TPDFVAEVVS…NLEKQILQAG (108 aa)) enclose the HPt domain. At His83 the chain carries Phosphohistidine.

As to quaternary structure, interacts with the B-type response regulators ARR1 and ARR2. Binds to AHK2, AHK3, AHK4 and AHK5. In terms of processing, two-component system major event consists of a His-to-Asp phosphorelay between a sensor histidine kinase (HK) and a response regulator (RR). In plants, the His-to-Asp phosphorelay involves an additional intermediate named Histidine-containing phosphotransfer protein (HPt). This multistep phosphorelay consists of a His-Asp-His-Asp sequential transfer of a phosphate group between first a His and an Asp of the HK protein, followed by the transfer to a conserved His of the HPt protein and finally the transfer to an Asp in the receiver domain of the RR protein. Expressed in the whole plant.

The protein resides in the cytoplasm. It is found in the cytosol. It localises to the nucleus. Functions as a two-component phosphorelay mediator between cytokinin sensor histidine kinases and response regulators (B-type ARRs). Plays an important role in propagating cytokinin signal transduction through the multistep His-to-Asp phosphorelay. This chain is Histidine-containing phosphotransfer protein 5 (AHP5), found in Arabidopsis thaliana (Mouse-ear cress).